The chain runs to 369 residues: Histidinol-phosphate aminotransferase (369 aa).

Lysine 222 carries the N6-(pyridoxal phosphate)lysine modification.

It belongs to the class-II pyridoxal-phosphate-dependent aminotransferase family. Histidinol-phosphate aminotransferase subfamily. In terms of assembly, homodimer. Pyridoxal 5'-phosphate serves as cofactor.

It catalyses the reaction L-histidinol phosphate + 2-oxoglutarate = 3-(imidazol-4-yl)-2-oxopropyl phosphate + L-glutamate. It participates in amino-acid biosynthesis; L-histidine biosynthesis; L-histidine from 5-phospho-alpha-D-ribose 1-diphosphate: step 7/9. This chain is Histidinol-phosphate aminotransferase, found in Halalkalibacterium halodurans (strain ATCC BAA-125 / DSM 18197 / FERM 7344 / JCM 9153 / C-125) (Bacillus halodurans).